The following is a 1489-amino-acid chain: ZEB2-regulated ABC transporter 1 (1489 aa).

The tract at residues 1-55 (MALPEANMSSTRSEQSSRSHDTIVGNEQPHSEKPAASAPGDQMSSDDEDEGPQTE) is disordered. The N-linked (GlcNAc...) asparagine glycan is linked to N7. A compositionally biased stretch (acidic residues) spans 44-53 (SSDDEDEGPQ). N-linked (GlcNAc...) asparagine glycans are attached at residues N70, N73, N118, N332, and N469. Residues 152–408 (LGLPDMVHQM…FINLGFECPD (257 aa)) enclose the ABC transporter 1 domain. The next 5 membrane-spanning stretches (helical) occupy residues 513–533 (LLGS…VAFI), 552–572 (GATL…EILT), 599–619 (ILVD…TLYF), 628–648 (GAFF…SGVF), and 662–682 (MVPA…VVPV). A glycan (N-linked (GlcNAc...) asparagine) is linked at N714. A helical membrane pass occupies residues 773 to 793 (GILIAMTIFNHVVYIVATEFI). The interval 811-834 (PSKAKSDPEASSSRPIPTTEKNNN) is disordered. Residues 819–834 (EASSSRPIPTTEKNNN) are compositionally biased toward polar residues. The region spanning 846 to 1088 (FHWNDVCYDI…TLTNYFVKHG (243 aa)) is the ABC transporter 2 domain. 882 to 889 (GVSGAGKT) is a binding site for ATP. Transmembrane regions (helical) follow at residues 1190–1210 (ALCI…PLSL), 1218–1238 (FAIF…MPHF), 1269–1289 (IPWN…PVGF), 1307–1327 (WLLI…AIAI), and 1333–1353 (AGGN…GVLA). N1402 is a glycosylation site (N-linked (GlcNAc...) asparagine). The helical transmembrane segment at 1457–1477 (GIGMVYIVVNIVGALFLYWLI) threads the bilayer.

The protein belongs to the ABC transporter superfamily. ABCG family. PDR (TC 3.A.1.205) subfamily.

It localises to the cell membrane. The protein localises to the vacuole membrane. Its function is as follows. ABC transporter involved in zearalenone production. The sequence is that of ZEB2-regulated ABC transporter 1 from Gibberella zeae (strain ATCC MYA-4620 / CBS 123657 / FGSC 9075 / NRRL 31084 / PH-1) (Wheat head blight fungus).